Reading from the N-terminus, the 179-residue chain is Inner membrane-spanning protein YciB (179 aa).

The next 5 helical transmembrane spans lie at 3-23, 49-69, 76-96, 121-141, and 149-169; these read FLFD…FGIY, PMQW…ILLH, WKPT…VIGW, VAWA…AYQF, and FKLF…SIWL.

The protein belongs to the YciB family.

It localises to the cell inner membrane. In terms of biological role, plays a role in cell envelope biogenesis, maintenance of cell envelope integrity and membrane homeostasis. The polypeptide is Inner membrane-spanning protein YciB (Cupriavidus metallidurans (strain ATCC 43123 / DSM 2839 / NBRC 102507 / CH34) (Ralstonia metallidurans)).